Consider the following 565-residue polypeptide: MWRLRLLVLAVLAAGSAEAQANSSDGFLEFSVGKFTYFVLSRRFPQEAVLRHISSNVTFLLFQIHSQYQNTTVSYTKTLLPSTSGTGNDRGLVFILRPEQTVCTWYLETEDTKPVQSVAVTLSYSERDPIPGGCNLEFDLDIDPNIYLDYNFFETTIKFAPANIGYARAAEPPPCDVSTGQESRWRLRYHVYQYFLPEGDLTEASLLQHLQRMAQVVQVMASAVKVVTLTADDKTVVSFSSLPGQGVIYNVIVWDPSLNTSAAYVPVHTYACSFDSVDGNCVPPGRVSTKVFSTLFALLGLFTCFFGHRFWKTELFFVGFIFLGFFFYILITRLTALKYEVRLVLTAVAGSIGGLLLVASWWRFGILTLCMLCVGLVLGFLVSSGTFFTPLGNLNVFHDDGVFWVTFSCIALLVPVIFLGCLRILNILACGIVGSYSVVLAINSYMFTSLSYITLNVLRRALNADFRGAFIRVPFQTNDYIILAVWGMLAVTGITLQIRRERGRPPFPPHPYKLWKQERERRVTNILDPSHHIPPLRERLYGWVARIKELFQKEQPAGERTPLLL.

Positions 1-21 (MWRLRLLVLAVLAAGSAEAQA) are cleaved as a signal peptide. N-linked (GlcNAc...) asparagine glycosylation is found at Asn22, Asn56, Asn70, and Asn259. Helical transmembrane passes span 287 to 307 (VSTKVFSTLFALLGLFTCFFG), 311 to 331 (WKTELFFVGFIFLGFFFYILI), 341 to 361 (VRLVLTAVAGSIGGLLLVASW), 364 to 384 (FGILTLCMLCVGLVLGFLVSS), 402 to 422 (VFWVTFSCIALLVPVIFLGCL), 427 to 447 (ILACGIVGSYSVVLAINSYMF), and 478 to 498 (NDYIILAVWGMLAVTGITLQI).

The protein localises to the cell membrane. Involved in the inhibition of cytokine-induced death of pancreatic beta cells. Involved in the promotion of insulin secretion from pancreatic beta cells. Is a downstream transcriptional target of p53/TP53, and acts as a pro-survival homeostatic factor that attenuates the development of cellular stress. Maintains protein homeostasis and promotes cell survival through attenuation of endoplasmic reticulum (ER) stress and the subsequent induction of unfolded protein response (UPR). This Rattus norvegicus (Rat) protein is Transmembrane 7 superfamily member 3 (Tm7sf3).